The sequence spans 404 residues: METRPSSSSSLSPATNLNLDRLKVLKLLGKGATGTVFLVHDSVSDSSVSSPFALKLVDKSSASSLRRARWEIQILRRLSDDTNPNPFLPKLLASSESSEFIAWALPYCSGGDLNVLRQRQNDGVFSSSVIKFYLAEIVCALDHLHTMGIAYRDLKPENILLQESGHVTLTDFDLSCSLNKPTRPEFYHLSDPEPDPNPESNLSHNKKSLRIFRQKKKKTKSARVNPITRRRLSFSGGERSNSFVGTDEYISPEVIRGDGHDFAVDWWALGVLTYEMMYGETPFKGRNKKETFRNVLVKEPEFAGKPSDLTDLIRRLLVKDPTKRFGFWRGAAEIKEHAFFKGVRWELLTEVLRPPFIPLRDDGDLTGKVTEESGFGIKEYFEKLKTPPLPLPHECSENNPFVDF.

Residues 22–340 (LKVLKLLGKG…AAEIKEHAFF (319 aa)) form the Protein kinase domain. Residues 28 to 36 (LGKGATGTV) and Lys55 contribute to the ATP site. The active-site Proton acceptor is the Asp153. A disordered region spans residues 185–207 (EFYHLSDPEPDPNPESNLSHNKK). Residues 341–404 (KGVRWELLTE…CSENNPFVDF (64 aa)) enclose the AGC-kinase C-terminal domain.

Belongs to the protein kinase superfamily. AGC Ser/Thr protein kinase family. As to expression, expressed in the epidermis and cortex of the transition zone of the root apex and developing flowers. Expressed in rosette leaves, stems and siliques.

It localises to the cytoplasm. It is found in the nucleus. The catalysed reaction is L-seryl-[protein] + ATP = O-phospho-L-seryl-[protein] + ADP + H(+). It catalyses the reaction L-threonyl-[protein] + ATP = O-phospho-L-threonyl-[protein] + ADP + H(+). In terms of biological role, regulates planar ovule integument development by suppressing aberrantly oriented growth. Maintains planar growth of integuments by repressing the developmental regulator and transcription factor KAN4 which is involved in the control of early integument growth and polarity. Restricts growth in stamen filaments, petals, and cotyledons. The protein is Serine/threonine-protein kinase UCN of Arabidopsis thaliana (Mouse-ear cress).